A 333-amino-acid polypeptide reads, in one-letter code: DNA-directed RNA polymerase subunit alpha (333 aa).

The interval 1-234 (MQSSVNEFLT…QQLAAFVDLK (234 aa)) is alpha N-terminal domain (alpha-NTD). The tract at residues 248–333 (IDPILLRPVD…SLKKDDKATA (86 aa)) is alpha C-terminal domain (alpha-CTD).

This sequence belongs to the RNA polymerase alpha chain family. As to quaternary structure, homodimer. The RNAP catalytic core consists of 2 alpha, 1 beta, 1 beta' and 1 omega subunit. When a sigma factor is associated with the core the holoenzyme is formed, which can initiate transcription.

The catalysed reaction is RNA(n) + a ribonucleoside 5'-triphosphate = RNA(n+1) + diphosphate. Functionally, DNA-dependent RNA polymerase catalyzes the transcription of DNA into RNA using the four ribonucleoside triphosphates as substrates. This chain is DNA-directed RNA polymerase subunit alpha, found in Stutzerimonas stutzeri (strain A1501) (Pseudomonas stutzeri).